We begin with the raw amino-acid sequence, 396 residues long: Ornithine aminotransferase (396 aa).

Position 255 is an N6-(pyridoxal phosphate)lysine (Lys-255).

This sequence belongs to the class-III pyridoxal-phosphate-dependent aminotransferase family. OAT subfamily. Pyridoxal 5'-phosphate serves as cofactor.

The protein localises to the cytoplasm. The catalysed reaction is a 2-oxocarboxylate + L-ornithine = L-glutamate 5-semialdehyde + an L-alpha-amino acid. Its pathway is amino-acid biosynthesis; L-proline biosynthesis; L-glutamate 5-semialdehyde from L-ornithine: step 1/1. In terms of biological role, catalyzes the interconversion of ornithine to glutamate semialdehyde. The protein is Ornithine aminotransferase of Bacillus anthracis (strain A0248).